A 324-amino-acid chain; its full sequence is Putative S-adenosyl-L-methionine-dependent methyltransferase MUL_0818 (324 aa).

S-adenosyl-L-methionine-binding positions include D138 and D167–L168.

The protein belongs to the UPF0677 family.

Exhibits S-adenosyl-L-methionine-dependent methyltransferase activity. The sequence is that of Putative S-adenosyl-L-methionine-dependent methyltransferase MUL_0818 from Mycobacterium ulcerans (strain Agy99).